Reading from the N-terminus, the 1158-residue chain is ATP-dependent helicase/deoxyribonuclease subunit B (1158 aa).

8 to 15 (GRAGTGKS) provides a ligand contact to ATP. Residues cysteine 791, cysteine 1112, cysteine 1115, and cysteine 1121 each contribute to the [4Fe-4S] cluster site.

This sequence belongs to the helicase family. AddB/RexB type 1 subfamily. Heterodimer of AddA and AddB. Mg(2+) serves as cofactor. [4Fe-4S] cluster is required as a cofactor.

In terms of biological role, the heterodimer acts as both an ATP-dependent DNA helicase and an ATP-dependent, dual-direction single-stranded exonuclease. Recognizes the chi site generating a DNA molecule suitable for the initiation of homologous recombination. The AddB subunit has 5' -&gt; 3' nuclease activity but not helicase activity. This is ATP-dependent helicase/deoxyribonuclease subunit B from Clostridium perfringens (strain ATCC 13124 / DSM 756 / JCM 1290 / NCIMB 6125 / NCTC 8237 / Type A).